Reading from the N-terminus, the 91-residue chain is MDEVKYPVLTEKSIRLLERNQYTFNVDSQSNKTKIKNWIENFFDVKVIAMNSYRLPEKGGKRVSMIGHPIRCKRVIITLRTGDSIPLFSEQ.

It belongs to the universal ribosomal protein uL23 family. As to quaternary structure, part of the 50S ribosomal subunit.

The protein resides in the plastid. It is found in the chloroplast. Binds to 23S rRNA. This chain is Large ribosomal subunit protein uL23c (rpl23), found in Pinus thunbergii (Japanese black pine).